A 376-amino-acid chain; its full sequence is Integrator complex assembly factor WDR73 (376 aa).

WD repeat units follow at residues 84 to 123 (FSEE…SDVI), 276 to 316 (ASKN…TESS), and 337 to 376 (TSPA…ITDR). Positions 316 to 336 (SSPQPIFSHRGHEMSQEAKSS) are disordered.

Belongs to the WD repeat WDR73 family.

The protein localises to the cytoplasm. The protein resides in the cytoskeleton. Its subcellular location is the spindle. It localises to the spindle pole. It is found in the cleavage furrow. Component of a multiprotein complex required for the assembly of the RNA endonuclease module of the integrator complex. Associates with ints9 and ints11 in the cytoplasm, stabilizing the ints9-ints11 heterodimer and blocking the active site of ints11. Brat1 then joins the complex and plugs the active site of ints11, leading to wdr73 release and nuclear import of ints9 and ints11. The chain is Integrator complex assembly factor WDR73 (wdr73) from Danio rerio (Zebrafish).